Here is a 694-residue protein sequence, read N- to C-terminus: MLEIEALYVPLSKLRNIGIMAHIDAGKTTTTERILYYTGRKHVLGSVDEGTATMDWMEQEKERGITIKAAATTCFWKEHRINIIDTPGHVDFTVEVERALRVLDGAVAVFDATAGVEPQSETVWRQAERYSVPRIAFMNKMDKTGADFFMSIKSMVEKLHAKPVAIQVPIGAEKDFIGVVDLIEMKAITWTSEDGSEFIKHEIPENMLDLAEEMREEMISMLAEEDEELLELYLEEQELPVEKIKDILRKATINNKLVPVLCGAAARNKGIQPLLDAVVDYLPSPIDIPAVKAITPSGEEIQIPPSVEGDFAGLAFKIQTDPYVGKLAYVRVYSGKLEKGSYVYNSTKQIRERVARLIFMHADKREDAEYARAGDIVAIIGLKNTTTGDTLCSQERPVLLEKMSFPEPVISIAIEPLTRDDEERMVKAVAALSEEDPTLRINVDRETGQVVLSGMGELHLEIVTDRLKREFGVNVRVGRPQVSYRETIRQTGTAEGKYVRQTGGRGQYGHVIMKFEPLPLDGEKQFEFINKTVGGVIPREYIPAIEEGVKEAMEMGVLAGYPMIGVRAVLLDGSYHEVDSSEIAFKVAASLAFKNAMKICQPVLLEPVMKLEVVVPEEYVGGIIADLNARRAQIESLESRINLRVIKAFVPLSELFGYATTLRSLSQGRAVHVAQFSHYKEAPDKVVEKVLKVV.

Positions 12 to 286 constitute a tr-type G domain; sequence SKLRNIGIMA…AVVDYLPSPI (275 aa). Residues 21–28, 85–89, and 139–142 contribute to the GTP site; these read AHIDAGKT, DTPGH, and NKMD.

The protein belongs to the TRAFAC class translation factor GTPase superfamily. Classic translation factor GTPase family. EF-G/EF-2 subfamily.

The protein resides in the cytoplasm. Catalyzes the GTP-dependent ribosomal translocation step during translation elongation. During this step, the ribosome changes from the pre-translocational (PRE) to the post-translocational (POST) state as the newly formed A-site-bound peptidyl-tRNA and P-site-bound deacylated tRNA move to the P and E sites, respectively. Catalyzes the coordinated movement of the two tRNA molecules, the mRNA and conformational changes in the ribosome. This chain is Elongation factor G, found in Pseudothermotoga lettingae (strain ATCC BAA-301 / DSM 14385 / NBRC 107922 / TMO) (Thermotoga lettingae).